A 500-amino-acid chain; its full sequence is Probable malate:quinone oxidoreductase (500 aa).

The protein belongs to the MQO family. FAD is required as a cofactor.

It carries out the reaction (S)-malate + a quinone = a quinol + oxaloacetate. The protein operates within carbohydrate metabolism; tricarboxylic acid cycle; oxaloacetate from (S)-malate (quinone route): step 1/1. The chain is Probable malate:quinone oxidoreductase from Corynebacterium aurimucosum (strain ATCC 700975 / DSM 44827 / CIP 107346 / CN-1) (Corynebacterium nigricans).